A 333-amino-acid polypeptide reads, in one-letter code: Homeobox protein Hox-D13 (333 aa).

The tract at residues 1-24 is disordered; it reads MDGLRTDGGAAGAAPASSSSSSSV. Low complexity predominate over residues 12–24; sequence GAAPASSSSSSSV. Positions 266 to 325 form a DNA-binding region, homeobox; it reads GRKKRVPYTKLQLKELENEYAINKFINKDKRRRISAATNLSERQVTIWFQNRRVKDKKIV.

This sequence belongs to the Abd-B homeobox family.

It is found in the nucleus. Sequence-specific transcription factor that binds gene promoters and activates their transcription. Part of a developmental regulatory system that provides cells with specific positional identities on the anterior-posterior axis. This Carollia perspicillata (Seba's short-tailed bat) protein is Homeobox protein Hox-D13 (HOXD13).